The chain runs to 801 residues: MERLWGLFQRAQQLSPRSSQTVYQRVEGPRKGHLEEEEEDGEEGAETLAHFCPMELRGPEPLGSRPRQPNLIPWAAAGRRAAPYLVLTALLIFTGAFLLGYVAFRGSCQACGDSVLVVSEDVNYEPDLDFHQGRLYWSDLQAMFLQFLGEGRLEDTIRQTSLRERVAGSAGMAALTQDIRAALSRQKLDHVWTDTHYVGLQFPDPAHPNTLHWVDEAGKVGEQLPLEDPDVYCPYSAIGNVTGELVYAHYGRPEDLQDLRARGVDPVGRLLLVRVGVISFAQKVTNAQDFGAQGVLIYPEPADFSQDPPKPSLSSQQAVYGHVHLGTGDPYTPGFPSFNQTQFPPVASSGLPSIPAQPISADIASRLLRKLKGPVAPQEWQGSLLGSPYHLGPGPRLRLVVNNHRTSTPINNIFGCIEGRSEPDHYVVIGAQRDAWGPGAAKSAVGTAILLELVRTFSSMVSNGFRPRRSLLFISWDGGDFGSVGSTEWLEGYLSVLHLKAVVYVSLDNAVLGDDKFHAKTSPLLTSLIESVLKQVDSPNHSGQTLYEQVVFTNPSWDAEVIRPLPMDSSAYSFTAFVGVPAVEFSFMEDDQAYPFLHTKEDTYENLHKVLQGRLPAVAQAVAQLAGQLLIRLSHDRLLPLDFGRYGDVVLRHIGNLNEFSGDLKARGLTLQWVYSARGDYIRAAEKLRQEIYSSEERDERLTRMYNVRIMRVEFYFLSQYVSPADSPFRHIFMGRGDHTLGALLDHLRLLRSNSSGTPGATSSTGFQESRFRRQLALLTWTLQGAANALSGDVWNIDNNF.

At 1 to 83 (MERLWGLFQR…WAAAGRRAAP (83 aa)) the chain is on the cytoplasmic side. The disordered stretch occupies residues 16 to 45 (PRSSQTVYQRVEGPRKGHLEEEEEDGEEGA). The Endocytosis signal signature appears at 23–26 (YQRV). Over residues 35 to 45 (EEEEEDGEEGA) the composition is skewed to acidic residues. A helical; Signal-anchor for type II membrane protein membrane pass occupies residues 84–104 (YLVLTALLIFTGAFLLGYVAF). At 105 to 801 (RGSCQACGDS…GDVWNIDNNF (697 aa)) the chain is on the extracellular side. 4 N-linked (GlcNAc...) asparagine glycosylation sites follow: Asn-240, Asn-339, Asn-540, and Asn-754.

It belongs to the peptidase M28 family. M28B subfamily. Homodimer. In terms of tissue distribution, predominantly expressed in liver. While the alpha form is also expressed in spleen, lung, muscle, prostate and peripheral blood mononuclear cells, the beta form is expressed in all tissues tested, albeit weakly.

It is found in the cell membrane. It localises to the cytoplasm. In terms of biological role, mediates cellular uptake of transferrin-bound iron in a non-iron dependent manner. May be involved in iron metabolism, hepatocyte function and erythrocyte differentiation. This chain is Transferrin receptor protein 2 (TFR2), found in Homo sapiens (Human).